The sequence spans 153 residues: UPF0756 membrane protein lmo1568 (153 aa).

4 helical membrane-spanning segments follow: residues 6 to 26 (MLFL…SLII), 54 to 74 (WGVT…QIGF), 80 to 100 (SFKS…SILA), and 117 to 137 (LVFG…GPVI).

This sequence belongs to the UPF0756 family.

It is found in the cell membrane. In Listeria monocytogenes serovar 1/2a (strain ATCC BAA-679 / EGD-e), this protein is UPF0756 membrane protein lmo1568.